Consider the following 382-residue polypeptide: tRNA(Ile)-lysidine synthase (382 aa).

50–55 (SGGRDS) contacts ATP.

This sequence belongs to the tRNA(Ile)-lysidine synthase family.

It localises to the cytoplasm. It carries out the reaction cytidine(34) in tRNA(Ile2) + L-lysine + ATP = lysidine(34) in tRNA(Ile2) + AMP + diphosphate + H(+). Functionally, ligates lysine onto the cytidine present at position 34 of the AUA codon-specific tRNA(Ile) that contains the anticodon CAU, in an ATP-dependent manner. Cytidine is converted to lysidine, thus changing the amino acid specificity of the tRNA from methionine to isoleucine. In Bifidobacterium animalis subsp. lactis (strain AD011), this protein is tRNA(Ile)-lysidine synthase.